The following is an 83-amino-acid chain: Small ribosomal subunit protein uS17 (83 aa).

The protein belongs to the universal ribosomal protein uS17 family. As to quaternary structure, part of the 30S ribosomal subunit.

Its function is as follows. One of the primary rRNA binding proteins, it binds specifically to the 5'-end of 16S ribosomal RNA. This Colwellia psychrerythraea (strain 34H / ATCC BAA-681) (Vibrio psychroerythus) protein is Small ribosomal subunit protein uS17.